A 225-amino-acid polypeptide reads, in one-letter code: Shikimate kinase (225 aa).

27-32 (GAGKTT) lines the ATP pocket. Position 31 (Thr-31) interacts with Mg(2+). Residues Asp-49, Arg-73, and Gly-95 each coordinate substrate. Arg-132 serves as a coordination point for ATP. Arg-150 is a substrate binding site. A disordered region spans residues 186–225 (GGSEPDEAADAAGGSEPDEAADAAGGSEPDEAADAAGGKR).

The protein belongs to the shikimate kinase family. As to quaternary structure, monomer. Mg(2+) serves as cofactor.

It localises to the cytoplasm. The catalysed reaction is shikimate + ATP = 3-phosphoshikimate + ADP + H(+). It functions in the pathway metabolic intermediate biosynthesis; chorismate biosynthesis; chorismate from D-erythrose 4-phosphate and phosphoenolpyruvate: step 5/7. Functionally, catalyzes the specific phosphorylation of the 3-hydroxyl group of shikimic acid using ATP as a cosubstrate. In Frankia casuarinae (strain DSM 45818 / CECT 9043 / HFP020203 / CcI3), this protein is Shikimate kinase.